The sequence spans 404 residues: Pectate lyase E (404 aa).

The signal sequence occupies residues 1–41 (MNNSRMSSVSTQKTTGRSALGTKSALAAIIATTMMVSVASA). Residues Asp182 and Asp225 each contribute to the Ca(2+) site. The active site involves Arg278.

This sequence belongs to the polysaccharide lyase 1 family. PLBC subfamily. Ca(2+) serves as cofactor.

The protein localises to the secreted. The enzyme catalyses Eliminative cleavage of (1-&gt;4)-alpha-D-galacturonan to give oligosaccharides with 4-deoxy-alpha-D-galact-4-enuronosyl groups at their non-reducing ends.. It participates in glycan metabolism; pectin degradation; 2-dehydro-3-deoxy-D-gluconate from pectin: step 2/5. In terms of biological role, involved in maceration and soft-rotting of plant tissue. Pectate lyases have been implicated as pathogenicity factors which induce maceration or rotting of plant tissue. PelE is sufficient to induce these effects under laboratory conditions. In Dickeya dadantii (strain 3937) (Erwinia chrysanthemi (strain 3937)), this protein is Pectate lyase E (pelE).